Reading from the N-terminus, the 66-residue chain is COP-associated protein (66 aa).

The HMA domain occupies methionine 1–valine 66. Cysteine 12 and cysteine 15 together coordinate Cu cation. Cysteine 12 and cysteine 15 are disulfide-bonded.

In terms of biological role, part of a cation-transporting system which is associated with copper export out of the H.pylori cells. The protein is COP-associated protein (copP) of Helicobacter pylori (strain ATCC 700392 / 26695) (Campylobacter pylori).